Reading from the N-terminus, the 243-residue chain is ABC transporter arginine-binding protein 1 (243 aa).

The N-terminal stretch at 1 to 19 (MKKLVLAALLASFTFGASA) is a signal peptide.

The protein belongs to the bacterial solute-binding protein 3 family. In terms of assembly, the complex is composed of two ATP-binding proteins (ArtP), two transmembrane proteins (ArtM and ArtQ) and two solute-binding proteins (ArtJ and ArtI).

Its subcellular location is the periplasm. In terms of biological role, part of the ABC transporter complex ArtPIQMJ involved in arginine transport. Binds L-arginine with high affinity. This Escherichia coli (strain K12) protein is ABC transporter arginine-binding protein 1 (artJ).